The following is a 112-amino-acid chain: Large ribosomal subunit protein bL17 (112 aa).

Belongs to the bacterial ribosomal protein bL17 family. In terms of assembly, part of the 50S ribosomal subunit. Contacts protein L32.

This is Large ribosomal subunit protein bL17 from Thermoanaerobacter pseudethanolicus (strain ATCC 33223 / 39E) (Clostridium thermohydrosulfuricum).